A 332-amino-acid chain; its full sequence is D-galactose/methyl-galactoside binding periplasmic protein MglB (332 aa).

The N-terminal stretch at 1-23 is a signal peptide; it reads MNKKVLTLSAVMASLLFGAHAHA. The beta-D-galactose site is built by aspartate 37 and asparagine 114. Beta-D-glucose-binding residues include aspartate 37 and asparagine 114. Residues aspartate 157, asparagine 159, aspartate 161, lysine 163, and glutamine 165 each coordinate Ca(2+). 3 residues coordinate beta-D-galactose: histidine 175, aspartate 177, and arginine 181. Positions 175, 177, and 181 each coordinate beta-D-glucose. Glutamate 228 lines the Ca(2+) pocket. Beta-D-galactose contacts are provided by asparagine 234, aspartate 259, and asparagine 279. Residues asparagine 234, aspartate 259, and asparagine 279 each coordinate beta-D-glucose.

The protein belongs to the bacterial solute-binding protein 2 family. The ABC transporter complex is composed of one ATP-binding protein (MglA), two transmembrane proteins (MglC) and a solute-binding protein (MglB).

It localises to the periplasm. In terms of biological role, part of the ABC transporter complex MglABC involved in galactose/methyl galactoside import. In addition, binds D-galactose and D-glucose and plays a role in the chemotaxis towards these two sugars by interacting with the Trg chemoreceptor. This chain is D-galactose/methyl-galactoside binding periplasmic protein MglB (mglB), found in Salmonella typhimurium (strain LT2 / SGSC1412 / ATCC 700720).